The chain runs to 318 residues: Putative HTH-type transcriptional regulatory protein TK0539 (318 aa).

The HTH cro/C1-type domain maps to 131 to 189 (LRELREKHGYSVNELAQLLGVSRKSLLNYERGEQAVSLDVAIQLEEIFDEALAEPIDIL). Positions 142–161 (VNELAQLLGVSRKSLLNYER) form a DNA-binding region, H-T-H motif.

The protein is Putative HTH-type transcriptional regulatory protein TK0539 of Thermococcus kodakarensis (strain ATCC BAA-918 / JCM 12380 / KOD1) (Pyrococcus kodakaraensis (strain KOD1)).